The chain runs to 465 residues: tRNA modification GTPase MnmE (465 aa).

(6S)-5-formyl-5,6,7,8-tetrahydrofolate contacts are provided by arginine 21, glutamate 85, and lysine 124. The TrmE-type G domain occupies 220 to 387 (GVPVAIIGET…LQQRLVAAAH (168 aa)). Asparagine 230 lines the K(+) pocket. GTP-binding positions include 230 to 235 (NAGKST), 249 to 255 (SDIHGTT), and 274 to 277 (DTAG). Residue serine 234 coordinates Mg(2+). The K(+) site is built by serine 249, isoleucine 251, and threonine 254. Threonine 255 is a binding site for Mg(2+). Lysine 465 provides a ligand contact to (6S)-5-formyl-5,6,7,8-tetrahydrofolate.

It belongs to the TRAFAC class TrmE-Era-EngA-EngB-Septin-like GTPase superfamily. TrmE GTPase family. In terms of assembly, homodimer. Heterotetramer of two MnmE and two MnmG subunits. K(+) serves as cofactor.

The protein localises to the cytoplasm. Functionally, exhibits a very high intrinsic GTPase hydrolysis rate. Involved in the addition of a carboxymethylaminomethyl (cmnm) group at the wobble position (U34) of certain tRNAs, forming tRNA-cmnm(5)s(2)U34. This is tRNA modification GTPase MnmE from Bacteroides fragilis (strain YCH46).